We begin with the raw amino-acid sequence, 358 residues long: Electron transfer flavoprotein subunit alpha, mitochondrial (358 aa).

298-326 (LYMAFGVSGAIQHLAGMRDSKVIVAVNKD) is an FAD binding site.

It belongs to the ETF alpha-subunit/FixB family. Heterodimer of an alpha and a beta subunit. Requires FAD as cofactor.

The protein resides in the mitochondrion matrix. Its function is as follows. The electron transfer flavoprotein serves as a specific electron acceptor for several dehydrogenases, including five acyl-CoA dehydrogenases, glutaryl-CoA and sarcosine dehydrogenase. It transfers the electrons to the main mitochondrial respiratory chain via ETF-ubiquinone oxidoreductase (ETF dehydrogenase). The chain is Electron transfer flavoprotein subunit alpha, mitochondrial (ETFA) from Oryza sativa subsp. indica (Rice).